Reading from the N-terminus, the 200-residue chain is Probable nicotinate-nucleotide adenylyltransferase (200 aa).

Belongs to the NadD family.

It catalyses the reaction nicotinate beta-D-ribonucleotide + ATP + H(+) = deamido-NAD(+) + diphosphate. The protein operates within cofactor biosynthesis; NAD(+) biosynthesis; deamido-NAD(+) from nicotinate D-ribonucleotide: step 1/1. Its function is as follows. Catalyzes the reversible adenylation of nicotinate mononucleotide (NaMN) to nicotinic acid adenine dinucleotide (NaAD). This Clostridium botulinum (strain Alaska E43 / Type E3) protein is Probable nicotinate-nucleotide adenylyltransferase.